A 373-amino-acid chain; its full sequence is 4-hydroxy-3-methylbut-2-en-1-yl diphosphate synthase (flavodoxin) (373 aa).

Residues cysteine 270, cysteine 273, cysteine 305, and glutamate 312 each coordinate [4Fe-4S] cluster.

Belongs to the IspG family. It depends on [4Fe-4S] cluster as a cofactor.

The catalysed reaction is (2E)-4-hydroxy-3-methylbut-2-enyl diphosphate + oxidized [flavodoxin] + H2O + 2 H(+) = 2-C-methyl-D-erythritol 2,4-cyclic diphosphate + reduced [flavodoxin]. The protein operates within isoprenoid biosynthesis; isopentenyl diphosphate biosynthesis via DXP pathway; isopentenyl diphosphate from 1-deoxy-D-xylulose 5-phosphate: step 5/6. Its function is as follows. Converts 2C-methyl-D-erythritol 2,4-cyclodiphosphate (ME-2,4cPP) into 1-hydroxy-2-methyl-2-(E)-butenyl 4-diphosphate. This is 4-hydroxy-3-methylbut-2-en-1-yl diphosphate synthase (flavodoxin) from Serratia proteamaculans (strain 568).